The primary structure comprises 517 residues: GMP synthase [glutamine-hydrolyzing] (517 aa).

One can recognise a Glutamine amidotransferase type-1 domain in the interval 9–199; sequence RILILDFGSQ…VLGVCGCERL (191 aa). Residue Cys86 is the Nucleophile of the active site. Active-site residues include His173 and Glu175. The region spanning 200–392 is the GMPS ATP-PPase domain; that stretch reads WTSESIIEDA…LGLPYNMLYR (193 aa). 227-233 contributes to the ATP binding site; the sequence is SGGVDSS.

As to quaternary structure, homodimer.

The catalysed reaction is XMP + L-glutamine + ATP + H2O = GMP + L-glutamate + AMP + diphosphate + 2 H(+). The protein operates within purine metabolism; GMP biosynthesis; GMP from XMP (L-Gln route): step 1/1. Functionally, catalyzes the synthesis of GMP from XMP. This chain is GMP synthase [glutamine-hydrolyzing], found in Vibrio parahaemolyticus serotype O3:K6 (strain RIMD 2210633).